Here is a 136-residue protein sequence, read N- to C-terminus: MVKFWVGVVSENHVKRGVDGGFCQVCHGKGGPLRRMKKGDYLLYYSPKIALDSNQKLQAFTAAGKMKDDRVYQFEMAPDFIPFRRDVEYYRSVQPCPIETARQHPDWKTYASQLRYGHFEVSRDFFMYIFNAMKLE.

Belongs to the UPF0310 family.

The sequence is that of UPF0310 protein SMU_442 from Streptococcus mutans serotype c (strain ATCC 700610 / UA159).